The sequence spans 583 residues: MPRGLELLIAQTILQGFDAQYGRFLEVTSGAQQRFEQADWHAVQQAMKSRIHLYDHHVGLVVEQLRCITDGKSTDADFLLRVKEHYTRLLPDYPRFEIAESFFNSVYCRLFDHRSLTPERLFIFSSQPERRFRTIPRPLAKDFFPDHGWEPLLMRILSDLPLRLPWQNKSRDIRYIIAHLTETLGEDALPRCHVQVANELFYRNKAAWLVGKLTTPDGTLPFLLPIHRTDEGELFVDTCLTTTAEASIVFGFARSYFMVYAPLPAALVEWLREILPGKTTAELYMAIGCQKHAKTESYREYLCYLAESDEKFIEAPGIRGMVMLVFTLPGFDRVFKIIKDKFAPQKEMSAAHVRACYQLVKEHDRVGRMADTQEFENFVLDKRQIDPALMALLRQEVPEKITDLGEHIVIRHLYIERRMVPLNIWLEQVEGQQLRDAIEEYGNAIRQLAAANIFPGDMLFKNFGVTRHGRVVFYDYDEICYMTEVNFRDIPPARYPEDELASEPWYSVSPGDVFPEEFRHWLCADPRIGPLFEEMHADLFRADYWRALQTRIKEGHVEDVYAYRRRQRFSVRYGAISSTANSS.

Residues 315–321 (APGIRGM) and Lys-336 contribute to the ATP site. Asp-371 is an active-site residue.

Belongs to the AceK family.

The protein localises to the cytoplasm. It carries out the reaction L-seryl-[isocitrate dehydrogenase] + ATP = O-phospho-L-seryl-[isocitrate dehydrogenase] + ADP + H(+). Functionally, bifunctional enzyme which can phosphorylate or dephosphorylate isocitrate dehydrogenase (IDH) on a specific serine residue. This is a regulatory mechanism which enables bacteria to bypass the Krebs cycle via the glyoxylate shunt in response to the source of carbon. When bacteria are grown on glucose, IDH is fully active and unphosphorylated, but when grown on acetate or ethanol, the activity of IDH declines drastically concomitant with its phosphorylation. This chain is Isocitrate dehydrogenase kinase/phosphatase, found in Salmonella enteritidis PT4 (strain P125109).